Reading from the N-terminus, the 434-residue chain is Serine hydroxymethyltransferase (434 aa).

(6S)-5,6,7,8-tetrahydrofolate-binding positions include Leu132 and 136–138; that span reads GHL. At Lys241 the chain carries N6-(pyridoxal phosphate)lysine.

Belongs to the SHMT family. In terms of assembly, homodimer. The cofactor is pyridoxal 5'-phosphate.

The protein resides in the cytoplasm. It carries out the reaction (6R)-5,10-methylene-5,6,7,8-tetrahydrofolate + glycine + H2O = (6S)-5,6,7,8-tetrahydrofolate + L-serine. Its pathway is one-carbon metabolism; tetrahydrofolate interconversion. The protein operates within amino-acid biosynthesis; glycine biosynthesis; glycine from L-serine: step 1/1. Functionally, catalyzes the reversible interconversion of serine and glycine with tetrahydrofolate (THF) serving as the one-carbon carrier. This reaction serves as the major source of one-carbon groups required for the biosynthesis of purines, thymidylate, methionine, and other important biomolecules. Also exhibits THF-independent aldolase activity toward beta-hydroxyamino acids, producing glycine and aldehydes, via a retro-aldol mechanism. The protein is Serine hydroxymethyltransferase of Nitrobacter hamburgensis (strain DSM 10229 / NCIMB 13809 / X14).